Here is a 540-residue protein sequence, read N- to C-terminus: uncharacterized protein (540 aa).

Topologically, residues methionine 1–threonine 61 are cytoplasmic. The chain crosses the membrane as a helical span at residues tyrosine 62 to leucine 82. At asparagine 83–glutamine 108 the chain is on the extracellular side. The chain crosses the membrane as a helical span at residues alanine 109–leucine 129. The Cytoplasmic segment spans residues glycine 130 to aspartate 131. The helical transmembrane segment at isoleucine 132–isoleucine 152 threads the bilayer. Over serine 153–arginine 169 the chain is Extracellular. Residues alanine 170–valine 190 form a helical membrane-spanning segment. Residues tyrosine 191–serine 203 are Cytoplasmic-facing. Residues phenylalanine 204–valine 224 form a helical membrane-spanning segment. Residues threonine 225–proline 232 lie on the Extracellular side of the membrane. A helical transmembrane segment spans residues tryptophan 233 to isoleucine 253. The Cytoplasmic segment spans residues proline 254–alanine 272. The helical transmembrane segment at leucine 273–tryptophan 293 threads the bilayer. The Extracellular segment spans residues aspartate 294–lysine 295. A helical membrane pass occupies residues proline 296 to glutamate 316. Residues serine 317–histidine 334 are Cytoplasmic-facing. The chain crosses the membrane as a helical span at residues methionine 335–tyrosine 355. The Extracellular portion of the chain corresponds to tyrosine 356–glycine 372. A helical transmembrane segment spans residues glycine 373–isoleucine 393. At lysine 394–proline 398 the chain is on the cytoplasmic side. A helical transmembrane segment spans residues alanine 399–leucine 419. Topologically, residues proline 420–asparagine 429 are extracellular. A helical membrane pass occupies residues phenylalanine 430–isoleucine 450. At leucine 451–glycine 461 the chain is on the cytoplasmic side. Residues methionine 462–glycine 482 form a helical membrane-spanning segment. Residues glycine 483–alanine 502 lie on the Extracellular side of the membrane. A helical membrane pass occupies residues alanine 503–leucine 523. At glutamate 524–alanine 540 the chain is on the cytoplasmic side.

The protein belongs to the major facilitator superfamily.

It localises to the membrane. This is an uncharacterized protein from Saccharomyces cerevisiae (strain ATCC 204508 / S288c) (Baker's yeast).